The chain runs to 168 residues: Phosphopantetheine adenylyltransferase (168 aa).

Ser-8 contacts substrate. Residues Ser-8–Phe-9 and His-16 contribute to the ATP site. Substrate is bound by residues Lys-40, Ala-72, and Arg-86. ATP-binding positions include Gly-87–Arg-89, Glu-97, and Tyr-122–Ser-128.

Belongs to the bacterial CoaD family. In terms of assembly, homohexamer. Mg(2+) is required as a cofactor.

Its subcellular location is the cytoplasm. It catalyses the reaction (R)-4'-phosphopantetheine + ATP + H(+) = 3'-dephospho-CoA + diphosphate. The protein operates within cofactor biosynthesis; coenzyme A biosynthesis; CoA from (R)-pantothenate: step 4/5. In terms of biological role, reversibly transfers an adenylyl group from ATP to 4'-phosphopantetheine, yielding dephospho-CoA (dPCoA) and pyrophosphate. The chain is Phosphopantetheine adenylyltransferase from Trichodesmium erythraeum (strain IMS101).